We begin with the raw amino-acid sequence, 199 residues long: UPF0316 protein LA_0606 (199 aa).

The next 2 membrane-spanning stretches (helical) occupy residues 47–67 (IAAS…TQVI) and 73–93 (VFCY…GMIL).

The protein belongs to the UPF0316 family.

The protein localises to the cell membrane. The protein is UPF0316 protein LA_0606 of Leptospira interrogans serogroup Icterohaemorrhagiae serovar Lai (strain 56601).